The chain runs to 416 residues: Gamma-glutamyl phosphate reductase (416 aa).

This sequence belongs to the gamma-glutamyl phosphate reductase family.

Its subcellular location is the cytoplasm. It carries out the reaction L-glutamate 5-semialdehyde + phosphate + NADP(+) = L-glutamyl 5-phosphate + NADPH + H(+). It participates in amino-acid biosynthesis; L-proline biosynthesis; L-glutamate 5-semialdehyde from L-glutamate: step 2/2. Its function is as follows. Catalyzes the NADPH-dependent reduction of L-glutamate 5-phosphate into L-glutamate 5-semialdehyde and phosphate. The product spontaneously undergoes cyclization to form 1-pyrroline-5-carboxylate. This is Gamma-glutamyl phosphate reductase from Salmonella typhi.